Here is a 61-residue protein sequence, read N- to C-terminus: Putative neurotoxin-A (61 aa).

An N-terminal signal peptide occupies residues 1–19; that stretch reads MKTVCGVFMVLLALTVLLA. 3 cysteine pairs are disulfide-bonded: Cys-31/Cys-50, Cys-36/Cys-55, and Cys-40/Cys-57.

This sequence belongs to the short scorpion toxin superfamily. Expressed by the venom gland.

The protein localises to the secreted. This is Putative neurotoxin-A from Lychas mucronatus (Chinese swimming scorpion).